Consider the following 334-residue polypeptide: Glycerol-3-phosphate dehydrogenase [NAD(P)+] (334 aa).

Positions 14, 34, and 107 each coordinate NADPH. Residues Lys107 and Gly135 each contribute to the sn-glycerol 3-phosphate site. Ala139 contributes to the NADPH binding site. Residues Lys190, Asp243, Ser253, Arg254, and Asn255 each contribute to the sn-glycerol 3-phosphate site. Lys190 serves as the catalytic Proton acceptor. Arg254 lines the NADPH pocket. NADPH is bound by residues Val272 and Glu273.

Belongs to the NAD-dependent glycerol-3-phosphate dehydrogenase family.

It is found in the cytoplasm. The enzyme catalyses sn-glycerol 3-phosphate + NAD(+) = dihydroxyacetone phosphate + NADH + H(+). It carries out the reaction sn-glycerol 3-phosphate + NADP(+) = dihydroxyacetone phosphate + NADPH + H(+). It functions in the pathway membrane lipid metabolism; glycerophospholipid metabolism. Catalyzes the reduction of the glycolytic intermediate dihydroxyacetone phosphate (DHAP) to sn-glycerol 3-phosphate (G3P), the key precursor for phospholipid synthesis. This is Glycerol-3-phosphate dehydrogenase [NAD(P)+] from Neorickettsia sennetsu (strain ATCC VR-367 / Miyayama) (Ehrlichia sennetsu).